We begin with the raw amino-acid sequence, 156 residues long: 6,7-dimethyl-8-ribityllumazine synthase (156 aa).

5-amino-6-(D-ribitylamino)uracil-binding positions include phenylalanine 22, 57-59 (AYE), and 81-83 (TVI). 86–87 (GT) serves as a coordination point for (2S)-2-hydroxy-3-oxobutyl phosphate. The active-site Proton donor is the histidine 89. 5-amino-6-(D-ribitylamino)uracil is bound at residue phenylalanine 114. A (2S)-2-hydroxy-3-oxobutyl phosphate-binding site is contributed by arginine 128.

Belongs to the DMRL synthase family. In terms of assembly, forms an icosahedral capsid composed of 60 subunits, arranged as a dodecamer of pentamers.

It carries out the reaction (2S)-2-hydroxy-3-oxobutyl phosphate + 5-amino-6-(D-ribitylamino)uracil = 6,7-dimethyl-8-(1-D-ribityl)lumazine + phosphate + 2 H2O + H(+). Its pathway is cofactor biosynthesis; riboflavin biosynthesis; riboflavin from 2-hydroxy-3-oxobutyl phosphate and 5-amino-6-(D-ribitylamino)uracil: step 1/2. In terms of biological role, catalyzes the formation of 6,7-dimethyl-8-ribityllumazine by condensation of 5-amino-6-(D-ribitylamino)uracil with 3,4-dihydroxy-2-butanone 4-phosphate. This is the penultimate step in the biosynthesis of riboflavin. This Erwinia tasmaniensis (strain DSM 17950 / CFBP 7177 / CIP 109463 / NCPPB 4357 / Et1/99) protein is 6,7-dimethyl-8-ribityllumazine synthase.